The primary structure comprises 419 residues: Elongation factor Tu, chloroplastic (419 aa).

The region spanning Lys-10–Lys-214 is the tr-type G domain. Residues Gly-19–Thr-26 are G1. Residue Gly-19–Thr-26 coordinates GTP. Residue Thr-26 coordinates Mg(2+). The segment at Gly-60–Asn-64 is G2. A G3 region spans residues Asp-81–Gly-84. GTP-binding positions include Asp-81–His-85 and Asn-136–Asp-139. Residues Asn-136–Asp-139 form a G4 region. Residues Ser-174–Leu-176 are G5.

This sequence belongs to the TRAFAC class translation factor GTPase superfamily. Classic translation factor GTPase family. EF-Tu/EF-1A subfamily.

The protein localises to the plastid. The protein resides in the chloroplast. The enzyme catalyses GTP + H2O = GDP + phosphate + H(+). Functionally, GTP hydrolase that promotes the GTP-dependent binding of aminoacyl-tRNA to the A-site of ribosomes during protein biosynthesis. In Stigeoclonium helveticum (Green alga), this protein is Elongation factor Tu, chloroplastic (tufA).